The sequence spans 161 residues: 2-C-methyl-D-erythritol 2,4-cyclodiphosphate synthase (161 aa).

The a divalent metal cation site is built by aspartate 10 and histidine 12. Residues 10–12 (DVH) and 36–37 (HS) each bind 4-CDP-2-C-methyl-D-erythritol 2-phosphate. Histidine 44 lines the a divalent metal cation pocket. 4-CDP-2-C-methyl-D-erythritol 2-phosphate-binding positions include 58–60 (DIG), 63–67 (FSDTD), and arginine 144.

It belongs to the IspF family. As to quaternary structure, homotrimer. Requires a divalent metal cation as cofactor.

It catalyses the reaction 4-CDP-2-C-methyl-D-erythritol 2-phosphate = 2-C-methyl-D-erythritol 2,4-cyclic diphosphate + CMP. It participates in isoprenoid biosynthesis; isopentenyl diphosphate biosynthesis via DXP pathway; isopentenyl diphosphate from 1-deoxy-D-xylulose 5-phosphate: step 4/6. Its function is as follows. Involved in the biosynthesis of isopentenyl diphosphate (IPP) and dimethylallyl diphosphate (DMAPP), two major building blocks of isoprenoid compounds. Catalyzes the conversion of 4-diphosphocytidyl-2-C-methyl-D-erythritol 2-phosphate (CDP-ME2P) to 2-C-methyl-D-erythritol 2,4-cyclodiphosphate (ME-CPP) with a corresponding release of cytidine 5-monophosphate (CMP). In Burkholderia ambifaria (strain ATCC BAA-244 / DSM 16087 / CCUG 44356 / LMG 19182 / AMMD) (Burkholderia cepacia (strain AMMD)), this protein is 2-C-methyl-D-erythritol 2,4-cyclodiphosphate synthase.